Here is a 284-residue protein sequence, read N- to C-terminus: Nucleotide-binding protein PputGB1_0956 (284 aa).

8 to 15 (GRSGSGKS) serves as a coordination point for ATP. Residue 60 to 63 (DARN) participates in GTP binding.

Belongs to the RapZ-like family.

Displays ATPase and GTPase activities. The sequence is that of Nucleotide-binding protein PputGB1_0956 from Pseudomonas putida (strain GB-1).